Consider the following 61-residue polypeptide: Small ribosomal subunit protein uS14 (61 aa).

4 residues coordinate Zn(2+): cysteine 24, cysteine 27, cysteine 40, and cysteine 43.

It belongs to the universal ribosomal protein uS14 family. Zinc-binding uS14 subfamily. Part of the 30S ribosomal subunit. Contacts proteins S3 and S10. Zn(2+) serves as cofactor.

Binds 16S rRNA, required for the assembly of 30S particles and may also be responsible for determining the conformation of the 16S rRNA at the A site. The sequence is that of Small ribosomal subunit protein uS14 from Clostridium botulinum (strain ATCC 19397 / Type A).